The primary structure comprises 482 residues: Ribulose bisphosphate carboxylase large chain (482 aa).

Positions 1–2 (MS) are excised as a propeptide. Pro-3 carries the post-translational modification N-acetylproline. Lys-14 bears the N6,N6,N6-trimethyllysine mark. The substrate site is built by Asn-123 and Thr-173. The Proton acceptor role is filled by Lys-175. Residue Lys-177 participates in substrate binding. Residues Lys-201, Asp-203, and Glu-204 each coordinate Mg(2+). An N6-carboxylysine modification is found at Lys-201. His-294 functions as the Proton acceptor in the catalytic mechanism. Substrate contacts are provided by Arg-295, His-327, and Ser-379.

Belongs to the RuBisCO large chain family. Type I subfamily. In terms of assembly, heterohexadecamer of 8 large chains and 8 small chains; disulfide-linked. The disulfide link is formed within the large subunit homodimers. Requires Mg(2+) as cofactor. Post-translationally, the disulfide bond which can form in the large chain dimeric partners within the hexadecamer appears to be associated with oxidative stress and protein turnover.

The protein resides in the plastid. Its subcellular location is the chloroplast. The catalysed reaction is 2 (2R)-3-phosphoglycerate + 2 H(+) = D-ribulose 1,5-bisphosphate + CO2 + H2O. It carries out the reaction D-ribulose 1,5-bisphosphate + O2 = 2-phosphoglycolate + (2R)-3-phosphoglycerate + 2 H(+). Functionally, ruBisCO catalyzes two reactions: the carboxylation of D-ribulose 1,5-bisphosphate, the primary event in carbon dioxide fixation, as well as the oxidative fragmentation of the pentose substrate in the photorespiration process. Both reactions occur simultaneously and in competition at the same active site. In Phytolacca americana (American pokeweed), this protein is Ribulose bisphosphate carboxylase large chain.